A 458-amino-acid chain; its full sequence is UPF0210 protein MmarC6_1246 (458 aa).

This sequence belongs to the UPF0210 family.

In Methanococcus maripaludis (strain C6 / ATCC BAA-1332), this protein is UPF0210 protein MmarC6_1246.